The primary structure comprises 286 residues: Pantothenate synthetase (286 aa).

Residue 30-37 (MGCFHQGH) participates in ATP binding. The active-site Proton donor is His37. Gln61 contributes to the (R)-pantoate binding site. Gln61 provides a ligand contact to beta-alanine. 147-150 (GEKD) is a binding site for ATP. Gln153 contacts (R)-pantoate. 184 to 187 (MSSR) is a binding site for ATP.

This sequence belongs to the pantothenate synthetase family. Homodimer.

The protein localises to the cytoplasm. The enzyme catalyses (R)-pantoate + beta-alanine + ATP = (R)-pantothenate + AMP + diphosphate + H(+). Its pathway is cofactor biosynthesis; (R)-pantothenate biosynthesis; (R)-pantothenate from (R)-pantoate and beta-alanine: step 1/1. Functionally, catalyzes the condensation of pantoate with beta-alanine in an ATP-dependent reaction via a pantoyl-adenylate intermediate. The chain is Pantothenate synthetase from Desulfotalea psychrophila (strain LSv54 / DSM 12343).